A 340-amino-acid chain; its full sequence is GTP 3',8-cyclase (340 aa).

Residues 20-246 enclose the Radical SAM core domain; that stretch reads RFQRQYTYLR…PKAVNDGPAK (227 aa). Arginine 29 is a GTP binding site. Positions 36 and 40 each coordinate [4Fe-4S] cluster. Tyrosine 42 provides a ligand contact to S-adenosyl-L-methionine. Cysteine 43 is a binding site for [4Fe-4S] cluster. Arginine 79 contributes to the GTP binding site. Glycine 83 is a binding site for S-adenosyl-L-methionine. GTP is bound at residue threonine 110. An S-adenosyl-L-methionine-binding site is contributed by serine 134. Position 171 (lysine 171) interacts with GTP. Methionine 205 lines the S-adenosyl-L-methionine pocket. [4Fe-4S] cluster contacts are provided by cysteine 268 and cysteine 271. GTP is bound at residue 273–275; it reads RLR. Cysteine 285 serves as a coordination point for [4Fe-4S] cluster.

Belongs to the radical SAM superfamily. MoaA family. Monomer and homodimer. It depends on [4Fe-4S] cluster as a cofactor.

The enzyme catalyses GTP + AH2 + S-adenosyl-L-methionine = (8S)-3',8-cyclo-7,8-dihydroguanosine 5'-triphosphate + 5'-deoxyadenosine + L-methionine + A + H(+). Its pathway is cofactor biosynthesis; molybdopterin biosynthesis. Its function is as follows. Catalyzes the cyclization of GTP to (8S)-3',8-cyclo-7,8-dihydroguanosine 5'-triphosphate. The protein is GTP 3',8-cyclase of Haemophilus ducreyi (strain 35000HP / ATCC 700724).